The primary structure comprises 160 residues: Small ribosomal subunit protein bS6 (160 aa).

Basic and acidic residues-rich tracts occupy residues 94–119 (EEHEEGPSAMMRKADRDRERDDRGGR) and 125–152 (RGDREGRGDREGGGFRGDRGPRRPREDA). The segment at 94 to 160 (EEHEEGPSAM…DADTAAASEE (67 aa)) is disordered.

This sequence belongs to the bacterial ribosomal protein bS6 family.

Binds together with bS18 to 16S ribosomal RNA. This is Small ribosomal subunit protein bS6 from Rhodopseudomonas palustris (strain BisB5).